The sequence spans 326 residues: UDP-N-acetylglucosamine transporter (326 aa).

A run of 8 helical transmembrane segments spans residues 4–24 (NLKY…VLTM), 38–58 (LSST…ILLV), 136–156 (LGVY…FVQW), 174–194 (FVGL…GVYF), 212–232 (LGFF…GELV), 244–264 (LTWI…AVIK), 269–289 (ILKG…SYFW), and 293–313 (FVPT…TFLY).

This sequence belongs to the nucleotide-sugar transporter family. SLC35A subfamily. Interacts with SLC35A2; the interaction is reduced in the presence of SLC35A4. Found in a complex with SLC35A2 and SLC35A4. Interacts with MGAT4B. Post-translationally, O-Glcnacylation regulates the stability of SLC35A3 and the specific complex formation with MGAT4B.

Its subcellular location is the golgi apparatus membrane. The enzyme catalyses UMP(out) + UDP-N-acetyl-alpha-D-glucosamine(in) = UMP(in) + UDP-N-acetyl-alpha-D-glucosamine(out). Transports diphosphate-N-acetylglucosamine (UDP-GlcNAc) from the cytosol into the lumen of the Golgi apparatus, functioning as an antiporter that exchanges UDP-N-acetyl-alpha-D-glucosamine for UMP. May supply UDP-GlcNAc as substrate for Golgi-resident glycosyltransferases that generate highly branched, multiantennary complex N-glycans and keratan sulfate. However, the exact role of SLC35A3 still needs to be elucidated, it could be a member of a catalytically more efficient multiprotein complex rather than function independently as a single transporter. This is UDP-N-acetylglucosamine transporter (SLC35A3) from Bos taurus (Bovine).